We begin with the raw amino-acid sequence, 89 residues long: Nitrogen regulatory protein (89 aa).

The PTS EIIA type-2 domain occupies 6-89 (TILTPGRSLV…ALLHLEAPID (84 aa)). His-68 (tele-phosphohistidine intermediate) is an active-site residue.

The protein resides in the cytoplasm. Functionally, seems to have a role in regulating nitrogen assimilation. The protein is Nitrogen regulatory protein (ptsN) of Pseudomonas putida (Arthrobacter siderocapsulatus).